A 937-amino-acid polypeptide reads, in one-letter code: Aconitate hydratase A (937 aa).

[4Fe-4S] cluster contacts are provided by Cys-439, Cys-505, and Cys-508. Residues 898-921 are disordered; it reads KKESKSTQSTTSKGCGSADTSSET.

This sequence belongs to the aconitase/IPM isomerase family. Monomer. It depends on [4Fe-4S] cluster as a cofactor.

The catalysed reaction is citrate = D-threo-isocitrate. The enzyme catalyses (2S,3R)-3-hydroxybutane-1,2,3-tricarboxylate = 2-methyl-cis-aconitate + H2O. It functions in the pathway carbohydrate metabolism; tricarboxylic acid cycle; isocitrate from oxaloacetate: step 2/2. It participates in organic acid metabolism; propanoate degradation. Its function is as follows. Involved in the catabolism of short chain fatty acids (SCFA) via the tricarboxylic acid (TCA)(acetyl degradation route) and probably the 2-methylcitrate cycle I (propionate degradation route). Catalyzes the reversible isomerization of citrate to isocitrate via cis-aconitate. Could catalyze the hydration of 2-methyl-cis-aconitate to yield (2R,3S)-2-methylisocitrate. The apo form of AcnA functions as a RNA-binding regulatory protein. The chain is Aconitate hydratase A (acn) from Francisella tularensis subsp. holarctica (strain LVS).